The chain runs to 340 residues: Short-chain dehydrogenase/reductase ffsI (340 aa).

6 residues coordinate NADP(+): Leu46, Arg71, Asp96, Asn123, Tyr211, and Lys215. The active-site Proton acceptor is the Tyr211. The active-site Lowers pKa of active site Tyr is the Lys215.

This sequence belongs to the short-chain dehydrogenases/reductases (SDR) family.

It functions in the pathway mycotoxin biosynthesis. In terms of biological role, short-chain dehydrogenase/reductase; part of the gene cluster that mediates the biosynthesis of the cytotoxic leucine-containing cytochalasans, including aspochalasin C, aspochalasin E, TMC-169, flavichalasine F, aspergillin PZ, aspochalasin M and flavichalasine G. The first step in the pathway is catalyzed by the hybrid PKS-NRPS ffsA that utilizes 8 units of malonyl-CoA to iteratively assemble the octaketide chain before addition of L-leucine by the C-terminal NRPS modules. Because ffsA lacks a designated enoylreductase (ER) domain, the required activity is provided the enoyl reductase fssC. The methyltransferase (MT) domain of ffsA catalyzes the alpha-methylation at C10 and C14 using S-adenosyl-L-methionine as the methyl-donating cosubstrate. Reduction by the hydrolyase ffsE, followed by dehydration and intra-molecular Diels-Alder cyclization by the Diels-Alderase ffsF then yield the required isoindolone-fused macrocycle. A number of oxidative steps catalyzed by the tailoring cytochrome P450 monooxygenase ffsD, the FAD-linked oxidoreductase ffsJ and the short-chain dehydrogenase/reductase ffsI, are further required to afford the final products. The chain is Short-chain dehydrogenase/reductase ffsI from Aspergillus flavipes.